The following is a 338-amino-acid chain: Glycerol-3-phosphate dehydrogenase [NAD(P)+] (338 aa).

The NADPH site is built by Ser-14, Phe-15, Arg-35, and Lys-109. Sn-glycerol 3-phosphate is bound by residues Lys-109 and Gly-137. Ala-141 contributes to the NADPH binding site. Sn-glycerol 3-phosphate is bound by residues Lys-192, Asp-247, Ser-257, Arg-258, and Asn-259. The active-site Proton acceptor is the Lys-192. Arg-258 lines the NADPH pocket. NADPH-binding residues include Leu-282 and Glu-284.

The protein belongs to the NAD-dependent glycerol-3-phosphate dehydrogenase family.

The protein resides in the cytoplasm. It carries out the reaction sn-glycerol 3-phosphate + NAD(+) = dihydroxyacetone phosphate + NADH + H(+). The catalysed reaction is sn-glycerol 3-phosphate + NADP(+) = dihydroxyacetone phosphate + NADPH + H(+). It functions in the pathway membrane lipid metabolism; glycerophospholipid metabolism. Functionally, catalyzes the reduction of the glycolytic intermediate dihydroxyacetone phosphate (DHAP) to sn-glycerol 3-phosphate (G3P), the key precursor for phospholipid synthesis. The polypeptide is Glycerol-3-phosphate dehydrogenase [NAD(P)+] (Rickettsia rickettsii (strain Iowa)).